The primary structure comprises 610 residues: E-selectin (610 aa).

An N-terminal signal peptide occupies residues 1–21; that stretch reads MIASQFLSALTLVLLIKESGA. Residues 22–139 enclose the C-type lectin domain; it reads WSYNTSTEAM…CSKKKLALCY (118 aa). Over 22-556 the chain is Extracellular; it reads WSYNTSTEAM…CEAPTESNIP (535 aa). Asn25 is a glycosylation site (N-linked (GlcNAc...) asparagine). Disulfide bonds link Cys40-Cys138, Cys111-Cys130, Cys143-Cys154, Cys148-Cys163, and Cys165-Cys174. Ca(2+) is bound by residues Glu101, Asn103, and Glu109. Residues 101–109, 113–118, and 126–128 contribute to the a carbohydrate site; these read EPNNRQKDE, EIYIKR, and NDE. 2 residues coordinate Ca(2+): Asn126 and Asp127. In terms of domain architecture, EGF-like spans 140–175; it reads TAACTNTSCSGHGECVETINNYTCKCDPGFSGLKCE. 2 N-linked (GlcNAc...) asparagine glycosylation sites follow: Asn145 and Asn160. 6 Sushi domains span residues 178–239, 240–301, 303–364, 366–427, 429–490, and 491–549; these read VNCT…ACNV, VECD…TCKA, TCRA…VCEA, QCTA…TCEA, RCDA…SCQV, and VKCS…TCEA. N-linked (GlcNAc...) asparagine glycosylation is found at Asn179, Asn199, and Asn203. Cystine bridges form between Cys180-Cys224, Cys193-Cys206, Cys210-Cys237, Cys242-Cys286, Cys255-Cys268, Cys272-Cys299, Cys304-Cys349, Cys335-Cys362, Cys367-Cys412, Cys398-Cys425, Cys430-Cys475, Cys461-Cys488, Cys493-Cys534, and Cys520-Cys547. An N-linked (GlcNAc...) asparagine glycan is attached at Asn265. 2 N-linked (GlcNAc...) asparagine glycosylation sites follow: Asn312 and Asn332. N-linked (GlcNAc...) asparagine glycans are attached at residues Asn503 and Asn527. A helical membrane pass occupies residues 557-578; it reads LVAGLSAAGLSLLTLAPFLLWL. The Cytoplasmic segment spans residues 579–610; sequence RKCLRKAKKFVPASSCQSLESDGSYQKPSYIL.

This sequence belongs to the selectin/LECAM family. As to quaternary structure, interacts with SELPLG/PSGL1 and PODXL2 through the sialyl Lewis X epitope. SELPLG sulfation appears not to be required for this interaction.

It localises to the cell membrane. Cell-surface glycoprotein having a role in immunoadhesion. Mediates in the adhesion of blood neutrophils in cytokine-activated endothelium through interaction with SELPLG/PSGL1. May have a role in capillary morphogenesis. The polypeptide is E-selectin (SELE) (Homo sapiens (Human)).